A 501-amino-acid chain; its full sequence is Tetrachloroethene reductive dehalogenase (501 aa).

A signal peptide (tat-type signal) is located at residues 1-37; sequence MEKKKKPELSRRDFGKLIIGGGAAATIAPFGVPGANA. Residues Ala-74, Tyr-207, 309-314, 329-332, and 341-343 each bind corrinoid; these read NGVGQS, MGAC, and VRL. The 4Fe-4S ferredoxin-type 1 domain occupies 356–386; sequence KPIDFGVTEFCETCKKCARECPSKAITEGPR. Cys-366, Cys-369, Cys-372, and Cys-376 together coordinate [4Fe-4S] cluster. Position 394–401 (394–401) interacts with corrinoid; that stretch reads HNQSGKLQ. Cys-409 lines the [4Fe-4S] cluster pocket. Tyr-419 lines the corrinoid pocket. Residues Cys-420, Cys-423, and Cys-427 each coordinate [4Fe-4S] cluster. One can recognise a 4Fe-4S ferredoxin-type 2 domain in the interval 420 to 439; that stretch reads CGVCVAVCPFTKGNIWIHDG.

Belongs to the PceA family. As to quaternary structure, monomer. Requires [4Fe-4S] cluster as cofactor. Corrinoid is required as a cofactor. In terms of processing, predicted to be exported by the Tat system. The position of the signal peptide cleavage has not been experimentally proven.

The protein localises to the cytoplasm. Its subcellular location is the cell inner membrane. The enzyme catalyses trichloroethene + chloride + A + H(+) = tetrachloroethene + AH2. It catalyses the reaction trichloroethene + AH2 = (Z)-1,2-dichloroethene + chloride + A + H(+). Its activity is regulated as follows. Both the processed and unprocessed enzymes are catalytically active. PCE-dependent growth and PceA activity are inhibited in the presence of high concentrations of 5,6-dimethylbenzimidazole (DMB), probably due to the formation a DMB-containing nor-B12 cofactor. Dechlorination of PCE is stimulated by ammonium ions. Activity is inhibited by chlorinated methanes. Catalyzes the reductive dechlorination of tetrachloroethene (PCE) to trichloroethene (TCE) and of trichloroethene to cis-1,2-dichloroethene (DCE). In addition, trans-1,3-dichloropropene, 1,1,3-trichloropropene and 2,3-dichloropropene are reduced to a mixture of mono-chloropropenes, 1,1-dichloropropene, and 2-chloropropene, respectively. Is also able to convert brominated phenols such as 4-bromophenol (4-BP), 2,4-dibromophenol (2,4-DBP) and 2,4,6-tribromophenol (2,4,6-TBP). Utilizes formate or pyruvate as electron donors. Titanium(III) citrate could also serve as electron donor. Reduced methyl viologen can act as the artificial electron donor. The polypeptide is Tetrachloroethene reductive dehalogenase (Sulfurospirillum multivorans (Dehalospirillum multivorans)).